A 222-amino-acid chain; its full sequence is Protein-L-isoaspartate O-methyltransferase (222 aa).

S67 is a catalytic residue.

The protein belongs to the methyltransferase superfamily. L-isoaspartyl/D-aspartyl protein methyltransferase family.

The protein resides in the cytoplasm. The catalysed reaction is [protein]-L-isoaspartate + S-adenosyl-L-methionine = [protein]-L-isoaspartate alpha-methyl ester + S-adenosyl-L-homocysteine. Functionally, catalyzes the methyl esterification of L-isoaspartyl residues in peptides and proteins that result from spontaneous decomposition of normal L-aspartyl and L-asparaginyl residues. It plays a role in the repair and/or degradation of damaged proteins. In Parvibaculum lavamentivorans (strain DS-1 / DSM 13023 / NCIMB 13966), this protein is Protein-L-isoaspartate O-methyltransferase.